The following is a 659-amino-acid chain: MQMRGCVCHLGVYCVHNDWKNKQYRVPIYQCLFFNAETHSLHTFLVIGNEISENLLDKISISKEKIFMWDLNEQIMSITQKTESICELMFGNKQIIQKLSRTFIFLTIILNSNMYEIIDVCIDSNAVLYMPDLRPMIIRCVGNYSKISSELLSDSDCTQATKKMRFDYHVTNFCFSLNVNGKKVLFSSTESSESILEKLLEFFTIQTYKLAEEQFLMVTPKNFFTVLFDEDMCLLLLQTVVSFLYDNLFRNKLVVKQVHDYIGPDLWPQGHERAVYFVGFPNMWFLSIYDLDNKIPCIKNICNRILLYCGLPDSLGPDGCQSVPSTQCVDEFEDLPNLGALQYLKYNSLVVTMETVENSENVYYFFGEQDLFIVKLVDIIQSLLELYVPKSFLPDFSDAYIKSEILLKFISRLHKKSNNIFCKIVKKITEFLRCFLNACRLMDLNWMFIRNMHIVYFIGPKKDPSVVLPLLKTSVESCWKKILNSSRTPVVNINYIPGYNFLHSSCSFLTSGDINSEDSHWTITASKCLYNCLGASQITVDFKNIYTNFQQMVSVFLSHRYENKYWIEYFEPNNYFLETHEGLLDCNRYTAVWTTENKLIRQSVGYPLTDKIDFIHYIQVVIEIFKKWLLTKYSQQEYAETVRLGSKIISDHLHLFNVN.

It belongs to the herpesviridae HEPA family. In terms of assembly, associates with the primase and the helicase to form the helicase-primase complex. Interacts with the origin-binding protein. Interacts with the polymerase catalytic subunit.

It is found in the host nucleus. Its function is as follows. Component of the helicase/primase complex. Unwinds the DNA at the replication forks and generates single-stranded DNA for both leading and lagging strand synthesis. The primase synthesizes short RNA primers on the lagging strand that the polymerase presumably elongates using dNTPs. The primase-associated factor has no known catalytic activity in the complex and may serve to facilitate the formation of the replisome by directly interacting with the origin-binding protein and the polymerase. The sequence is that of DNA helicase/primase complex-associated protein (U74) from Human herpesvirus 7 (strain JI) (HHV-7).